Reading from the N-terminus, the 254-residue chain is Proteasome subunit alpha (254 aa).

Positions 234 to 254 (EEMLPTPAATEDAPANGDAPS) are disordered.

This sequence belongs to the peptidase T1A family. As to quaternary structure, the 20S proteasome core is composed of 14 alpha and 14 beta subunits that assemble into four stacked heptameric rings, resulting in a barrel-shaped structure. The two inner rings, each composed of seven catalytic beta subunits, are sandwiched by two outer rings, each composed of seven alpha subunits. The catalytic chamber with the active sites is on the inside of the barrel. Has a gated structure, the ends of the cylinder being occluded by the N-termini of the alpha-subunits. Is capped by the proteasome-associated ATPase, ARC.

Its subcellular location is the cytoplasm. It functions in the pathway protein degradation; proteasomal Pup-dependent pathway. With respect to regulation, the formation of the proteasomal ATPase ARC-20S proteasome complex, likely via the docking of the C-termini of ARC into the intersubunit pockets in the alpha-rings, may trigger opening of the gate for substrate entry. Interconversion between the open-gate and close-gate conformations leads to a dynamic regulation of the 20S proteasome proteolysis activity. Its function is as follows. Component of the proteasome core, a large protease complex with broad specificity involved in protein degradation. The polypeptide is Proteasome subunit alpha (Rhodococcus erythropolis (strain PR4 / NBRC 100887)).